A 229-amino-acid polypeptide reads, in one-letter code: Thymidylate kinase (229 aa).

Residue 9-16 (GPEGSGKS) coordinates ATP.

Belongs to the thymidylate kinase family.

It carries out the reaction dTMP + ATP = dTDP + ADP. Functionally, phosphorylation of dTMP to form dTDP in both de novo and salvage pathways of dTTP synthesis. The polypeptide is Thymidylate kinase (Roseiflexus castenholzii (strain DSM 13941 / HLO8)).